A 286-amino-acid chain; its full sequence is E3 SUMO-protein ligase K-bZIP (286 aa).

Disordered stretches follow at residues 1 to 22 (MPRM…EKDE) and 106 to 130 (WTLS…SKRR).

Interacts with host HDAC1 and HDAC2, these interactions suppress HDAC activities. Interacts with protein ORF57. Interacts with protein vPK. In terms of processing, sumoylated.

It participates in protein modification; protein sumoylation. Functionally, SUMO E3 ligase that plays a role in viral gene regulation and is essential for viral reactivation. Disrupts host G1 cell cycle control thus allowing viral transcription and translation to proceed at the early stages of infection. Catalyzes its own SUMO modification as well as that of its interacting partners such as host TP53 and RB1. Regulates viral gene expression and reactivation and may mediate the SUMOylation of viral promoters in the low methylated 'Lys-9' histone H3 (H3K9me) region which results in a diminution of viral gene expression after reactivation. SUMOylates also host histone lysine demethylase 4A/KDM4A, an essential step for complete enrichment of SUMO-2/3 on the viral genome during viral transactivation and reactivation. This is E3 SUMO-protein ligase K-bZIP (K8) from Human herpesvirus 8 type P (isolate GK18) (HHV-8).